A 263-amino-acid chain; its full sequence is Ribonuclease HII (263 aa).

Positions 71–262 constitute an RNase H type-2 domain; it reads KAIAGIDEVG…VKSMCCDSTN (192 aa). A divalent metal cation is bound by residues Asp-77, Glu-78, and Asp-172.

This sequence belongs to the RNase HII family. The cofactor is Mn(2+). Mg(2+) serves as cofactor.

It localises to the cytoplasm. It carries out the reaction Endonucleolytic cleavage to 5'-phosphomonoester.. Functionally, endonuclease that specifically degrades the RNA of RNA-DNA hybrids. The sequence is that of Ribonuclease HII from Streptococcus pyogenes serotype M1.